We begin with the raw amino-acid sequence, 117 residues long: MDTETSPLLSHNLSTREGIKQNTQGLLAHTIARHPGITAIILGILILLVIILIIVAIVYYNRSVDCKSNMPRPPPSYSIQQSEPHHHFPVFFRKRKNSTSQQAHIPSDEQLAELVHS.

N12 carries N-linked (GlcNAc...) asparagine; by host glycosylation. The helical transmembrane segment at 39 to 59 threads the bilayer; the sequence is AIILGILILLVIILIIVAIVY. N-linked (GlcNAc...) asparagine; by host glycosylation is found at N61 and N97.

This sequence belongs to the asfivirus minor capsid protein p17 family. As to quaternary structure, interacts with the minor capsid protein M1249L and with the hexon capsid protein p72 capsomers; these interactions form a rigid zipper structure that stabilizes the capsomers. Interacts with host STING1.

It localises to the virion membrane. It is found in the host endoplasmic reticulum membrane. Functionally, together with the penton and the other minor capsid proteins (M1249L, p49), forms a complicated network immediately below the outer capsid shell, stabilizing the whole capsid. Three copies of p17 encircle each p72 capsomer in the inner capsid shell, anchoring p72 capsomers on the inner membrane. Required for the assembly of the capsid and icosahedral morphogenesis. Additionally, inhibits the host cGAS-STING pathway through its interaction with STING1 and subsequent interference of the recruitment of downstream components TBK1 and IKBKE. This chain is Minor capsid protein p17, found in Ornithodoros (relapsing fever ticks).